The primary structure comprises 954 residues: Chromosomal passenger complex protein BIR1 (954 aa).

BIR repeat units lie at residues 20–117 and 153–241; these read RLRT…LLIY and RKFT…YFFQ. Positions 208, 211, 228, and 237 each coordinate Zn(2+). The interval 375–419 is disordered; that stretch reads NVQLTQSSSPIKKKRKFKRISPRKIFDEEDSEHSLNNNSANGDNK. Over residues 385 to 396 the composition is skewed to basic residues; it reads IKKKRKFKRISP. Phosphoserine occurs at positions 477, 508, and 552. 2 disordered regions span residues 541–645 and 661–685; these read DIDR…SGKV and FSASDFSPSSQSEQSSKSSSVISTP. Positions 556–583 are enriched in basic and acidic residues; that stretch reads PKTHELIRDNSEKREAQNGEFRHQKDST. Serine 587 is subject to Phosphoserine. Polar residues predominate over residues 593 to 604; it reads SNKSGDNSSNIT. Phosphoserine is present on residues serine 751 and serine 765. The segment at 798–839 is disordered; sequence LVSGTSSYPRNSRLEEQRKETSTSLADNSKKGSSFNEGNNEK. The span at 809-818 shows a compositional bias: basic and acidic residues; that stretch reads SRLEEQRKET. A compositionally biased stretch (polar residues) spans 819–835; that stretch reads STSLADNSKKGSSFNEG.

As to quaternary structure, component of the CPC complex at least composed of IPL1, BIR1 and SLI15. Interacts with CBF2/NDC10. Interacts with CBF3D/SKP1.

Its function is as follows. Component of the chromosomal passenger complex (CPC), a complex that acts as a key regulator of chromosome segregation and cytokinesis. The chain is Chromosomal passenger complex protein BIR1 (BIR1) from Saccharomyces cerevisiae (strain ATCC 204508 / S288c) (Baker's yeast).